A 278-amino-acid chain; its full sequence is Sulfur carrier protein FdhD (278 aa).

The active-site Cysteine persulfide intermediate is Cys113. Residue 251-256 (FCRNGR) participates in Mo-bis(molybdopterin guanine dinucleotide) binding.

Belongs to the FdhD family.

It localises to the cytoplasm. Its function is as follows. Required for formate dehydrogenase (FDH) activity. Acts as a sulfur carrier protein that transfers sulfur from IscS to the molybdenum cofactor prior to its insertion into FDH. The sequence is that of Sulfur carrier protein FdhD from Shewanella oneidensis (strain ATCC 700550 / JCM 31522 / CIP 106686 / LMG 19005 / NCIMB 14063 / MR-1).